A 156-amino-acid chain; its full sequence is Cytochrome c-type biogenesis protein CcmE (156 aa).

At 1-7 (MTRRQRR) the chain is on the cytoplasmic side. A helical; Signal-anchor for type II membrane protein membrane pass occupies residues 8 to 28 (LGILLAALVCAGAATALTLNA). Residues 29-156 (FRSNLVFFFS…AKESARSASR (128 aa)) are Periplasmic-facing. Residues His123 and Tyr127 each coordinate heme.

It belongs to the CcmE/CycJ family.

It localises to the cell inner membrane. Functionally, heme chaperone required for the biogenesis of c-type cytochromes. Transiently binds heme delivered by CcmC and transfers the heme to apo-cytochromes in a process facilitated by CcmF and CcmH. The chain is Cytochrome c-type biogenesis protein CcmE from Ralstonia pickettii (strain 12J).